The chain runs to 362 residues: Bifunctional nitrilase/nitrile hydratase NIT4 (362 aa).

The CN hydrolase domain occupies 31–307 (VRATVVQAST…EALITADLDL (277 aa)). Glu71 functions as the Proton acceptor in the catalytic mechanism. Lys162 acts as the Proton donor in catalysis. The active-site Nucleophile is Cys196.

The protein belongs to the carbon-nitrogen hydrolase superfamily. Nitrilase family.

The catalysed reaction is a nitrile + 2 H2O = a carboxylate + NH4(+). The enzyme catalyses 3-cyano-L-alanine + 2 H2O = L-aspartate + NH4(+). Functionally, highly specific for beta-cyano-L-alanine (Ala(CN)). Low activity with 3-phenylpropionitrile (PPN). Not associated with auxin production but may be involved in cyanide detoxification. In Oryza sativa subsp. japonica (Rice), this protein is Bifunctional nitrilase/nitrile hydratase NIT4 (NIT4).